The primary structure comprises 189 residues: Potassium-transporting ATPase KdpC subunit (189 aa).

A helical transmembrane segment spans residues 6 to 26 (PAIMMVLVFTIICGGIYPAVV).

It belongs to the KdpC family. As to quaternary structure, the system is composed of three essential subunits: KdpA, KdpB and KdpC.

It is found in the cell inner membrane. Functionally, part of the high-affinity ATP-driven potassium transport (or Kdp) system, which catalyzes the hydrolysis of ATP coupled with the electrogenic transport of potassium into the cytoplasm. This subunit acts as a catalytic chaperone that increases the ATP-binding affinity of the ATP-hydrolyzing subunit KdpB by the formation of a transient KdpB/KdpC/ATP ternary complex. The sequence is that of Potassium-transporting ATPase KdpC subunit from Geobacter metallireducens (strain ATCC 53774 / DSM 7210 / GS-15).